The following is a 451-amino-acid chain: uncharacterized protein (451 aa).

Residues 2–60 (VVKVKQKIPLKIKRMGINGEGIGFYQKTLVFVPGALKGENIFCQITAVKRNFAEAKLLT) enclose the TRAM domain. [4Fe-4S] cluster-binding residues include Cys73, Cys79, Cys82, and Cys162. Gln283, Tyr312, Asp333, and Asp381 together coordinate S-adenosyl-L-methionine. Cys408 functions as the Nucleophile in the catalytic mechanism.

The protein belongs to the class I-like SAM-binding methyltransferase superfamily. RNA M5U methyltransferase family.

This is an uncharacterized protein from Streptococcus pyogenes serotype M3 (strain ATCC BAA-595 / MGAS315).